The sequence spans 93 residues: Small ribosomal subunit protein uS19 (93 aa).

This sequence belongs to the universal ribosomal protein uS19 family.

Its function is as follows. Protein S19 forms a complex with S13 that binds strongly to the 16S ribosomal RNA. This chain is Small ribosomal subunit protein uS19, found in Dehalococcoides mccartyi (strain ATCC BAA-2266 / KCTC 15142 / 195) (Dehalococcoides ethenogenes (strain 195)).